The primary structure comprises 1146 residues: Ankyrin repeat domain-containing protein 24 (1146 aa).

ANK repeat units follow at residues 81 to 110, 114 to 143, 147 to 176, 180 to 209, and 213 to 242; these read EGKS…NVMS, AGYN…VVDV, SGWT…HLNP, SGAT…AAND, and QGRT…QPGI. 3 disordered regions span residues 272-320, 607-627, and 766-785; these read RPSP…PDDR, REME…GAQA, and ERVR…GDTT. Polar residues predominate over residues 286–297; it reads EASSQNSMSSHG. Residues 320–517 are a coiled coil; sequence RDAYEEIVRL…QALRQQETRE (198 aa). A coiled-coil region spans residues 714–1110; the sequence is AAEASEKLQV…AARDHSSVVA (397 aa).

In terms of assembly, homodimer. Interacts (via C-terminal domain) with TRIOBP (via C-terminal domain) isoform 4; recruits TRIOBP isoform 4 to stereocilia rootlets.

Its subcellular location is the cell membrane. It localises to the cell projection. The protein localises to the stereocilium. Its function is as follows. Component of the stereocilia rootlet in hair cells of inner ear. Bridges the apical plasma membrane with the lower rootlet and maintains normal distribution of TRIOBP, thereby reinforcing stereocilia insertion points and organizing rootlets for hearing with long-term resilience. This chain is Ankyrin repeat domain-containing protein 24, found in Homo sapiens (Human).